The chain runs to 295 residues: Non-selective voltage-gated ion channel VDAC2 (295 aa).

Residues lysine 24 and lysine 32 each contribute to the ATP site. An N6-acetyllysine; alternate modification is found at lysine 32. N6-succinyllysine; alternate is present on lysine 32. Residue lysine 32 forms a Glycyl lysine isopeptide (Lys-Gly) (interchain with G-Cter in ubiquitin); alternate linkage. The next 2 membrane-spanning stretches (beta stranded) occupy residues 38-47 and 51-59; these read LVKLDVKTKS and VEFSTSGSS. Lysine 65 is covalently cross-linked (Glycyl lysine isopeptide (Lys-Gly) (interchain with G-Cter in ubiquitin)). Residues 66–76 traverse the membrane as a beta stranded segment; the sequence is VSGTLETKYKW. Position 79 is a phosphotyrosine (tyrosine 79). Transmembrane regions (beta stranded) follow at residues 81 to 88, 92 to 101, and 107 to 116; these read LTFTEKWN, TLGTEIAIED, and LKLTFDTTFS. Threonine 119 is modified (phosphothreonine). Position 121 is an N6-acetyllysine; alternate (lysine 121). Lysine 121 participates in a covalent cross-link: Glycyl lysine isopeptide (Lys-Gly) (interchain with G-Cter in ubiquitin); alternate. Lysine 122 participates in a covalent cross-link: Glycyl lysine isopeptide (Lys-Gly) (interchain with G-Cter in ubiquitin). Transmembrane regions (beta stranded) follow at residues 123 to 132, 135 to 142, 149 to 157, and 162 to 170; these read SGKIKSAYKR, INLGCDVD, AIHGSAVFG, and LAGYQMTFD. Lysine 173 participates in a covalent cross-link: Glycyl lysine isopeptide (Lys-Gly) (interchain with G-Cter in ubiquitin). 6 beta stranded membrane-spanning segments follow: residues 175–187, 190–197, 201–210, 214–223, 230–239, and 243–250; these read KLTRSNFAVGYRT, FQLHTNVN, EFGGSIYQKV, FDTSVNLAWT, RFGIAAKYQL, and ASISAKVN. Phosphotyrosine is present on tyrosine 237. Serine 252 bears the Phosphoserine mark. Residues 254–256 and 272–276 each bind NAD(+); these read LIG and SALVD. The next 2 beta stranded transmembrane spans lie at 254 to 263 and 266 to 275; these read LIGVGYTQTL and GVKLTLSALV. Lysine 278 is modified (N6-acetyllysine; alternate). Lysine 278 participates in a covalent cross-link: Glycyl lysine isopeptide (Lys-Gly) (interchain with G-Cter in ubiquitin); alternate. A beta stranded transmembrane segment spans residues 285–294; the sequence is HKLGLALELE.

Belongs to the eukaryotic mitochondrial porin family. Monomer, homodimer and higher order oligomers; formation of higher order structures is necessary for scramblase activity. Interacts with ARMC12 in a TBC1D21-dependent manner. Interacts with KLC3. Interacts with SPATA33. Interacts with PPP3CC in a SPATA33-dependent manner. In terms of processing, ubiquitinated by PRKN during mitophagy, leading to its degradation and enhancement of mitophagy. Deubiquitinated by USP30. Highly expressed in heart, kidney, brain and ascitic tumor with very low levels in liver. Expressed in the head region of epididymal sperm.

It localises to the mitochondrion outer membrane. It is found in the membrane. The catalysed reaction is chloride(in) = chloride(out). The enzyme catalyses K(+)(in) = K(+)(out). It carries out the reaction a 1,2-diacyl-sn-glycero-3-phospho-L-serine(in) = a 1,2-diacyl-sn-glycero-3-phospho-L-serine(out). It catalyses the reaction a 1,2-diacyl-sn-glycero-3-phosphocholine(in) = a 1,2-diacyl-sn-glycero-3-phosphocholine(out). The catalysed reaction is a 1,2-diacyl-sn-glycero-3-phospho-(1D-myo-inositol)(in) = a 1,2-diacyl-sn-glycero-3-phospho-(1D-myo-inositol)(out). Its function is as follows. Non-selective voltage-gated ion channel that mediates the transport of anions and cations through the mitochondrion outer membrane and plasma membrane. The channel adopts an open conformation at zero mV and a closed conformation at both positive and negative potentials. There are two populations of channels; the main that functions in a lower open-state conductance with lower ion selectivity, that switch, in a voltage-dependent manner, from the open to a low-conducting 'closed' state and the other that has a normal ion selectivity in the typical high conductance, 'open' state. Binds various lipids, including the sphingolipid ceramide, the phospholipid phosphatidylcholine, and the sterols cholesterol and oxysterol. Binding of ceramide promotes the mitochondrial outer membrane permeabilization (MOMP) apoptotic pathway. Catalyzes the scrambling of phospholipids across the outer mitochondrial membrane; the mechanism is unrelated to channel activity and is capable of translocating both anionic and zwitterionic phospholipids. The protein is Non-selective voltage-gated ion channel VDAC2 of Rattus norvegicus (Rat).